The sequence spans 216 residues: UPF0502 protein Pfl01_3711 (216 aa).

The protein belongs to the UPF0502 family.

The chain is UPF0502 protein Pfl01_3711 from Pseudomonas fluorescens (strain Pf0-1).